A 1207-amino-acid chain; its full sequence is Systemin receptor SR160 (1207 aa).

An N-terminal signal peptide occupies residues Met-1–Ala-34. The Cys pair 1 signature appears at Cys-71–Cys-78. LRR repeat units follow at residues Asn-109–Gln-131, Thr-135–Gly-157, Asn-161–Lys-181, Ser-186–Ser-207, Glu-213–Lys-234, Asn-235–Ser-257, Asn-258–Cys-280, Lys-282–Ser-304, Leu-305–Asp-325, Thr-329–Glu-350, Ser-353–Lys-375, Asn-378–Pro-401, Lys-402–Lys-423, Asn-428–Cys-450, Gln-452–Leu-474, Lys-476–Gln-499, Ala-500–Thr-523, Lys-524–Ser-547, Asn-548–Cys-570, and Ser-572–Gln-594. A glycan (N-linked (GlcNAc...) asparagine) is linked at Asn-119. Residues Asn-166 and Asn-196 are each glycosylated (N-linked (GlcNAc...) asparagine). Residues Asn-235 and Asn-245 are each glycosylated (N-linked (GlcNAc...) asparagine). The N-linked (GlcNAc...) asparagine glycan is linked to Asn-287. N-linked (GlcNAc...) asparagine glycans are attached at residues Asn-339 and Asn-363. N-linked (GlcNAc...) asparagine glycans are attached at residues Asn-412 and Asn-449. N-linked (GlcNAc...) asparagine glycosylation is present at Asn-521. Residues Asn-556, Asn-584, Asn-646, and Asn-662 are each glycosylated (N-linked (GlcNAc...) asparagine). LRR repeat units lie at residues Ser-664–Met-686, Tyr-688–Lys-711, Asn-712–Thr-735, and Leu-736–Asp-758. N-linked (GlcNAc...) asparagine glycans are attached at residues Asn-724, Asn-746, and Asn-767. The Cys pair 2 motif lies at Cys-771–Cys-779. A helical membrane pass occupies residues Ser-803–Ile-823. The Protein kinase domain occupies Phe-888–Ile-1163. ATP contacts are provided by residues Val-894–Val-902 and Lys-916. Asp-1014 functions as the Proton acceptor in the catalytic mechanism.

Belongs to the protein kinase superfamily. Ser/Thr protein kinase family. Glycosylated.

It localises to the cell membrane. It catalyses the reaction L-seryl-[protein] + ATP = O-phospho-L-seryl-[protein] + ADP + H(+). It carries out the reaction L-threonyl-[protein] + ATP = O-phospho-L-threonyl-[protein] + ADP + H(+). Functionally, receptor with a serine/threonine-protein kinase activity. Involved in the perception of systemin, a peptide hormone responsible for the systemic activation of defense genes in leaves of wounded plants. May also regulate, in response to brassinosteroid binding, a signaling cascade involved in plant development. This chain is Systemin receptor SR160, found in Solanum peruvianum (Peruvian tomato).